The primary structure comprises 433 residues: Pyrimidine-nucleoside phosphorylase (433 aa).

Residue 81–83 participates in phosphate binding; the sequence is KHS. G88 and T90 together coordinate K(+). Phosphate contacts are provided by residues T92, 108-110, and T120; that span reads KMS. Positions 168 and 187 each coordinate substrate. K(+) contacts are provided by L243, A246, and E255.

This sequence belongs to the thymidine/pyrimidine-nucleoside phosphorylase family. Homodimer. K(+) is required as a cofactor.

The catalysed reaction is uridine + phosphate = alpha-D-ribose 1-phosphate + uracil. It catalyses the reaction thymidine + phosphate = 2-deoxy-alpha-D-ribose 1-phosphate + thymine. The enzyme catalyses 2'-deoxyuridine + phosphate = 2-deoxy-alpha-D-ribose 1-phosphate + uracil. Functionally, catalyzes phosphorolysis of the pyrimidine nucleosides uridine, thymidine and 2'-deoxyuridine with the formation of the corresponding pyrimidine base and ribose-1-phosphate. In Geobacillus stearothermophilus (Bacillus stearothermophilus), this protein is Pyrimidine-nucleoside phosphorylase (pdp).